We begin with the raw amino-acid sequence, 456 residues long: Adenylosuccinate lyase (456 aa).

N(6)-(1,2-dicarboxyethyl)-AMP is bound by residues 15-16, 90-92, and 122-123; these read RY, NHD, and TS. His171 serves as the catalytic Proton donor/acceptor. Gln248 is a N(6)-(1,2-dicarboxyethyl)-AMP binding site. The active-site Proton donor/acceptor is Ser296. N(6)-(1,2-dicarboxyethyl)-AMP is bound by residues Ser297, 302 to 304, Asn310, Arg336, and 341 to 345; these read KVN and STVLR.

It belongs to the lyase 1 family. Adenylosuccinate lyase subfamily. Homotetramer. Residues from neighboring subunits contribute catalytic and substrate-binding residues to each active site.

The catalysed reaction is N(6)-(1,2-dicarboxyethyl)-AMP = fumarate + AMP. It carries out the reaction (2S)-2-[5-amino-1-(5-phospho-beta-D-ribosyl)imidazole-4-carboxamido]succinate = 5-amino-1-(5-phospho-beta-D-ribosyl)imidazole-4-carboxamide + fumarate. Its pathway is purine metabolism; AMP biosynthesis via de novo pathway; AMP from IMP: step 2/2. The protein operates within purine metabolism; IMP biosynthesis via de novo pathway; 5-amino-1-(5-phospho-D-ribosyl)imidazole-4-carboxamide from 5-amino-1-(5-phospho-D-ribosyl)imidazole-4-carboxylate: step 2/2. In terms of biological role, catalyzes two reactions in de novo purine nucleotide biosynthesis. Catalyzes the breakdown of 5-aminoimidazole- (N-succinylocarboxamide) ribotide (SAICAR or 2-[5-amino-1-(5-phospho-beta-D-ribosyl)imidazole-4-carboxamido]succinate) to 5-aminoimidazole-4-carboxamide ribotide (AICAR or 5-amino-1-(5-phospho-beta-D-ribosyl)imidazole-4-carboxamide) and fumarate, and of adenylosuccinate (ADS or N(6)-(1,2-dicarboxyethyl)-AMP) to adenosine monophosphate (AMP) and fumarate. The protein is Adenylosuccinate lyase (purB) of Pseudomonas aeruginosa (strain ATCC 15692 / DSM 22644 / CIP 104116 / JCM 14847 / LMG 12228 / 1C / PRS 101 / PAO1).